A 345-amino-acid chain; its full sequence is Phosphate acyltransferase (345 aa).

It belongs to the PlsX family. In terms of assembly, homodimer. Probably interacts with PlsY.

Its subcellular location is the cytoplasm. The enzyme catalyses a fatty acyl-[ACP] + phosphate = an acyl phosphate + holo-[ACP]. It participates in lipid metabolism; phospholipid metabolism. In terms of biological role, catalyzes the reversible formation of acyl-phosphate (acyl-PO(4)) from acyl-[acyl-carrier-protein] (acyl-ACP). This enzyme utilizes acyl-ACP as fatty acyl donor, but not acyl-CoA. This is Phosphate acyltransferase from Anaplasma phagocytophilum (strain HZ).